The chain runs to 149 residues: Protein-export protein SecB (149 aa).

Belongs to the SecB family. As to quaternary structure, homotetramer, a dimer of dimers. One homotetramer interacts with 1 SecA dimer.

It localises to the cytoplasm. Its function is as follows. One of the proteins required for the normal export of preproteins out of the cell cytoplasm. It is a molecular chaperone that binds to a subset of precursor proteins, maintaining them in a translocation-competent state. It also specifically binds to its receptor SecA. The protein is Protein-export protein SecB of Hydrogenovibrio crunogenus (strain DSM 25203 / XCL-2) (Thiomicrospira crunogena).